The following is a 155-amino-acid chain: Small ribosomal subunit protein uS7c (155 aa).

This sequence belongs to the universal ribosomal protein uS7 family. In terms of assembly, part of the 30S ribosomal subunit.

Its subcellular location is the plastid. The protein localises to the chloroplast. One of the primary rRNA binding proteins, it binds directly to 16S rRNA where it nucleates assembly of the head domain of the 30S subunit. This chain is Small ribosomal subunit protein uS7c (rps7), found in Cabomba caroliniana (Carolina fanwort).